The sequence spans 277 residues: Putative thiosulfate sulfurtransferase mpst-4 (277 aa).

Rhodanese domains follow at residues 15 to 153 (NFGN…VVQS) and 155 to 243 (SKAE…QHLN). Catalysis depends on Cys-204, which acts as the Cysteine persulfide intermediate.

It catalyses the reaction thiosulfate + hydrogen cyanide = thiocyanate + sulfite + 2 H(+). This is Putative thiosulfate sulfurtransferase mpst-4 from Caenorhabditis elegans.